The following is a 466-amino-acid chain: 3-isopropylmalate dehydratase large subunit (466 aa).

[4Fe-4S] cluster-binding residues include Cys347, Cys407, and Cys410.

Belongs to the aconitase/IPM isomerase family. LeuC type 1 subfamily. As to quaternary structure, heterodimer of LeuC and LeuD. Requires [4Fe-4S] cluster as cofactor.

It carries out the reaction (2R,3S)-3-isopropylmalate = (2S)-2-isopropylmalate. The protein operates within amino-acid biosynthesis; L-leucine biosynthesis; L-leucine from 3-methyl-2-oxobutanoate: step 2/4. In terms of biological role, catalyzes the isomerization between 2-isopropylmalate and 3-isopropylmalate, via the formation of 2-isopropylmaleate. The protein is 3-isopropylmalate dehydratase large subunit of Klebsiella pneumoniae subsp. pneumoniae (strain ATCC 700721 / MGH 78578).